Here is a 134-residue protein sequence, read N- to C-terminus: MADSFNFELVSPERLLLSASATEVVIPATEGEMTVMANHAPTMTTVKPGVVTVKTADGKTERFAVFGGFADILPTGCTLLAESAVHVDELDRTVLENRIDEARAELEGAIDEKKTRIEQFIAELTTLGEIVIPA.

It belongs to the ATPase epsilon chain family. As to quaternary structure, F-type ATPases have 2 components, CF(1) - the catalytic core - and CF(0) - the membrane proton channel. CF(1) has five subunits: alpha(3), beta(3), gamma(1), delta(1), epsilon(1). CF(0) has three main subunits: a, b and c.

The protein resides in the cell inner membrane. In terms of biological role, produces ATP from ADP in the presence of a proton gradient across the membrane. The polypeptide is ATP synthase epsilon chain (Sinorhizobium fredii (strain NBRC 101917 / NGR234)).